We begin with the raw amino-acid sequence, 379 residues long: MDALRLANTALAVDIFKKLCEKSATDNFVCSPLCISSSLSLIRKGSQGNTASELEKALHFEKVKDPDFGFQLLSSDISKISSANSLKLLKRVYVDNSIECKKDFINSAKKPYPLELETIDFKSQAEEARTQINSSVKELTDGNFETVLNEGSCDENTKIIMLGAASFKGKWVYTFNKSETKEMDFHINKKETKPVQMMHLEARLSIGYINELKTMVLEMPFQSKHFSMLILLPKDIEDDSTGLKKLEQDMTFEKYTHWTNPSMMANSKVKVSLPKFKMENSYDLKDMLKSLGINDAFNEEASDFSEMTESKGISISQAIQKACIEVDEDGTESADVSMERRLMNKEEFLADHPFIYILRHNKTRTIIMLGRYCGPSEAS.

3 N-linked (GlcNAc...) asparagine glycosylation sites follow: N133, N176, and N361.

Belongs to the serpin family. Ov-serpin subfamily.

It localises to the secreted. The protein resides in the extracellular space. May not exhibit serine protease inhibitory activity. The protein is Serpin B5 (serpinb5) of Xenopus tropicalis (Western clawed frog).